Here is a 359-residue protein sequence, read N- to C-terminus: Heme A synthase (359 aa).

The next 5 helical transmembrane spans lie at 8 to 28, 94 to 114, 124 to 144, 159 to 179, and 215 to 235; these read IMSIWLIVSTLLLLLMIVVGG, LLGRITGIIIIIPFLIFYYLK, LLLITCLVIIQGFMGWYMVKS, GHLLLAVVIYHQLIAELLIII, and IIIFLLYTQIMFGALVAGLDA. His-274 serves as a coordination point for heme. 3 helical membrane passes run 276 to 296, 303 to 323, and 328 to 348; these read WFGILISCLIICYAIWLIILN, MGMVAACLVLVQVTTGIITLV, and ILAALTHQVGAILILTTFLFI. A heme-binding site is contributed by His-334.

The protein belongs to the COX15/CtaA family. Type 2 subfamily. As to quaternary structure, interacts with CtaB. It depends on heme b as a cofactor.

It is found in the cell membrane. It catalyses the reaction Fe(II)-heme o + 2 A + H2O = Fe(II)-heme a + 2 AH2. It participates in porphyrin-containing compound metabolism; heme A biosynthesis; heme A from heme O: step 1/1. Its function is as follows. Catalyzes the conversion of heme O to heme A by two successive hydroxylations of the methyl group at C8. The first hydroxylation forms heme I, the second hydroxylation results in an unstable dihydroxymethyl group, which spontaneously dehydrates, resulting in the formyl group of heme A. The protein is Heme A synthase of Orientia tsutsugamushi (strain Ikeda) (Rickettsia tsutsugamushi).